A 751-amino-acid chain; its full sequence is MHTGGETSACKPSSVRLAPSFSFHAAGLQMAGQMSHSHQQYSDRRQQNLNDQQASALPYNDQIQQPLPNQRRMPQTFRDPATAPLRKLSVDLIKTYKHINEVYYAKKKRRHQQGQGDDSSHKKERKVYNDGYDDDNYDYIVKNGEKWMDRYEIDSLIGKGSFGQVVKAYDRAEQEWVAIKIIKNKKAFLNQAQIEVRLLELMNKHDTEMKYYIVHLKRHFMFRNHLCLVFEMLSYNLYDLLRNTNFRGVSLNLTRKFAQQMCTALLFLATPELSIIHCDLKPENILLCNPKRSAIKIVDFGSSCQLGQRIYQYIQSRFYRSPEVLLGMPYDLAIDMWSLGCILVEMHTGEPLFSGANEVDQMSKIVEVLGIPPAHILDQAPKARKFFEKMPEGTWNLKKTKDGKKEYKPPGTRKLHNLLGVETGGPGGRRGGESGHTVADYLKFKDLILRMLDYDAKTRIQPYYALQHSFFKKTADEGTNTSNSVSTSPAMEQSQSSGTTSSTSSSSGGSSGTSNSGRARSDPTHQHRHSGGHFTAAVQAMDCETHSPQVRQQFPPGWTVPEAPTQVTIETHPVQETTFHVPSSQQNVPHHHGNGSHHHHHHHHHHHGQHVLSNRTRTRIYNSPSTSSSTQDSMDVGHSHHSMTSLSSSTTSSSTSSSSTGNQGNQAYQNRPVAANTLDFGQNGTMDVNLTAFSNPRQETGITGHPDYQYSANTGPGHYVTEGHLTMRQGMDREDSPMTGVCVQQSPVASS.

Polar residues predominate over residues 59–68; that stretch reads YNDQIQQPLP. Disordered stretches follow at residues 59-81 and 104-129; these read YNDQ…RDPA and YAKK…KVYN. Positions 109–126 match the Bipartite nuclear localization signal motif; sequence RRHQQGQGDDSSHKKERK. The Protein kinase domain occupies 151–471; the sequence is YEIDSLIGKG…PYYALQHSFF (321 aa). Residues 157–165, Lys180, and 230–233 each bind ATP; these read IGKGSFGQV and FEML. Residue Asp279 is the Proton acceptor of the active site. A compositionally biased stretch (polar residues) spans 477–493; that stretch reads EGTNTSNSVSTSPAMEQ. 3 disordered regions span residues 477-532, 580-667, and 730-751; these read EGTN…HSGG, HVPS…GNQA, and GMDR…VASS. Low complexity predominate over residues 494-517; that stretch reads SQSSGTTSSTSSSSGGSSGTSNSG. Positions 585-613 are histidine-rich domain (HRD); sequence QQNVPHHHGNGSHHHHHHHHHHHGQHVLS. The segment covering 589-609 has biased composition (basic residues); that stretch reads PHHHGNGSHHHHHHHHHHHGQ. Positions 611-622 are enriched in polar residues; that stretch reads VLSNRTRTRIYN. Composition is skewed to low complexity over residues 623-633 and 642-660; these read SPSTSSSTQDS and SMTS…SSST. Polar residues predominate over residues 742 to 751; the sequence is CVQQSPVASS.

It belongs to the protein kinase superfamily. CMGC Ser/Thr protein kinase family. MNB/DYRK subfamily. Post-translationally, autophosphorylated on tyrosine residues.

The protein localises to the nucleus. It is found in the nucleus speckle. The catalysed reaction is L-seryl-[protein] + ATP = O-phospho-L-seryl-[protein] + ADP + H(+). It catalyses the reaction L-threonyl-[protein] + ATP = O-phospho-L-threonyl-[protein] + ADP + H(+). The enzyme catalyses L-tyrosyl-[protein] + ATP = O-phospho-L-tyrosyl-[protein] + ADP + H(+). It carries out the reaction [DNA-directed RNA polymerase] + ATP = phospho-[DNA-directed RNA polymerase] + ADP + H(+). In terms of biological role, dual-specificity kinase which possesses both serine/threonine and tyrosine kinase activities. Exhibits a substrate preference for proline at position P+1 and arginine at position P-3. Plays an important role in double-strand breaks (DSBs) repair following DNA damage. Mechanistically, phosphorylates RNF169 and increases its ability to block accumulation of TP53BP1 at the DSB sites thereby promoting homologous recombination repair (HRR). Also acts as a positive regulator of transcription by acting as a CTD kinase that mediates phosphorylation of the CTD (C-terminal domain) of the large subunit of RNA polymerase II (RNAP II) POLR2A. Modulates alternative splicing by phosphorylating the splice factor SRSF6. Phosphorylates SEPTIN4, SEPTIN5 and SF3B1. The polypeptide is Dual specificity tyrosine-phosphorylation-regulated kinase 1A (Xenopus tropicalis (Western clawed frog)).